The primary structure comprises 110 residues: MTSLLTFCAAALMEITGCFAFWAWLRLDKSPLWLIPGMLALALFAYLLTLADSPLAGRAYAAYGGIYIASALLWGWAIEGNRPDQWDVIGAAICLVGMSVILFGPRALPA.

The next 4 helical transmembrane spans lie at 4–24 (LLTF…FWAW), 31–51 (PLWL…LTLA), 59–79 (AYAA…WAIE), and 88–108 (VIGA…PRAL).

Belongs to the UPF0060 family.

The protein localises to the cell inner membrane. This is UPF0060 membrane protein Rpal_4363 from Rhodopseudomonas palustris (strain TIE-1).